The following is a 126-amino-acid chain: UPF0235 protein C15orf40 homolog (126 aa).

The interval 1–32 (MPKKAGATSKGKNQTKEPETAPPAAGPVATDP) is disordered. At Ser89 the chain carries Phosphoserine.

Belongs to the UPF0235 family.

In Mus musculus (Mouse), this protein is UPF0235 protein C15orf40 homolog.